The following is a 397-amino-acid chain: MELLDSFIFISLVKAAVIFGVLMTTLAYLQWVERKVIAHIQVRPGPYRVGPHGLLQPLADVIKLITKEDLVPPYVNKPLYLAAPFLAITMALLSISVIPFGPVIHIGPVTTAMQMTDLNIGVLFILAVSSMGVYGIALAGWASNNKYSLIGGLRSSAQMISYELPMSLAIAAPLLISNTLSLRELVERQAGSILNWNLLSGPFPQVISFIIFIIAAFAETNRVPFDLPEAENELVAGFHTEYSSMKFASFFMAEYANMITVSAMATLLFLGGWMAPWPAAYGSSLVPSILFGISGLVLLYHGVNAVRKRDKLTFPAFGIIFLGIAGIFLLPMVQSWLLPLFWFCAKTGAILFAFMWIRGTLPRFRYDQLMGFTWKFLFPVAMLNLLVTGFLVAWTTK.

A run of 10 helical transmembrane segments spans residues 7 to 27 (FIFI…TTLA), 84 to 104 (PFLA…GPVI), 120 to 140 (IGVL…ALAG), 156 to 176 (SAQM…PLLI), 198 to 218 (LLSG…AAFA), 258 to 278 (MITV…APWP), 279 to 299 (AAYG…LVLL), 313 to 333 (TFPA…LPMV), 337 to 357 (LLPL…FMWI), and 376 to 396 (FLFP…AWTT).

The protein belongs to the complex I subunit 1 family. As to quaternary structure, NDH-1 is composed of 14 different subunits. Subunits NuoA, H, J, K, L, M, N constitute the membrane sector of the complex.

Its subcellular location is the cell inner membrane. The enzyme catalyses a quinone + NADH + 5 H(+)(in) = a quinol + NAD(+) + 4 H(+)(out). NDH-1 shuttles electrons from NADH, via FMN and iron-sulfur (Fe-S) centers, to quinones in the respiratory chain. The immediate electron acceptor for the enzyme in this species is believed to be ubiquinone. Couples the redox reaction to proton translocation (for every two electrons transferred, four hydrogen ions are translocated across the cytoplasmic membrane), and thus conserves the redox energy in a proton gradient. This subunit may bind ubiquinone. The chain is NADH-quinone oxidoreductase subunit H 1 from Solibacter usitatus (strain Ellin6076).